We begin with the raw amino-acid sequence, 152 residues long: uncharacterized protein (152 aa).

Residues P7–P133 form the VOC domain.

This is an uncharacterized protein from Mycobacterium bovis (strain ATCC BAA-935 / AF2122/97).